The chain runs to 138 residues: ATP synthase epsilon chain (138 aa).

The protein belongs to the ATPase epsilon chain family. As to quaternary structure, F-type ATPases have 2 components, CF(1) - the catalytic core - and CF(0) - the membrane proton channel. CF(1) has five subunits: alpha(3), beta(3), gamma(1), delta(1), epsilon(1). CF(0) has three main subunits: a, b and c.

The protein localises to the cell membrane. Produces ATP from ADP in the presence of a proton gradient across the membrane. This chain is ATP synthase epsilon chain, found in Polynucleobacter asymbioticus (strain DSM 18221 / CIP 109841 / QLW-P1DMWA-1) (Polynucleobacter necessarius subsp. asymbioticus).